Consider the following 1518-residue polypeptide: Putative cellulose synthase 2 (1518 aa).

A catalytic region spans residues 1–731 (MYGTWFTTGK…EEKLEKQSFV (731 aa)). The next 3 membrane-spanning stretches (helical) occupy residues 24–44 (PVWVPVVLGVVLMAFVGSVRI), 71–91 (ITVFLMMLSLLVSLRYIVWRL), and 105–125 (LAVLLLLAEAYALMTLCLSYF). Positions 144 to 237 (QWPSVDVFVP…FAVIFDCDHV (94 aa)) are catalytic subdomain A. Residue aspartate 186 is part of the active site. Residues aspartate 233 and aspartate 235 each coordinate substrate. Residues 314 to 374 (EAVMGIGGFA…GQRVRWARGM (61 aa)) form a catalytic subdomain B region. Aspartate 330 is a catalytic residue. 5 consecutive transmembrane segments (helical) span residues 404–424 (FLFAIPRLTFLVSPLAFLFLG), 427–447 (IIAASPLAISVYALPHIFHSV), 465–485 (IYETSLALFLVRITIVTLLQP), 514–534 (ILAGVLCAALLRGVFGIVWQF), and 543–563 (FILNTLWVVISLIIVLASIAV). One can recognise a PilZ domain in the interval 569-668 (QTRNAPRVSV…ERQVVSMVFG (100 aa)). Residues 732 to 1518 (LKPVPRSARH…IARDDLTGEL (787 aa)) are cyclic di-GMP binding domain. The interval 765–785 (APSPDQSGVTAETPFGDSNTG) is disordered. The span at 768–785 (PDQSGVTAETPFGDSNTG) shows a compositional bias: polar residues. Residues 1481–1501 (ALYLAGLAGAGLAALGVWAWL) form a helical membrane-spanning segment.

It in the N-terminal section; belongs to the glycosyltransferase 2 family. This sequence in the C-terminal section; belongs to the AcsB/BcsB family.

It is found in the cell inner membrane. It catalyses the reaction [(1-&gt;4)-beta-D-glucosyl](n) + UDP-alpha-D-glucose = [(1-&gt;4)-beta-D-glucosyl](n+1) + UDP + H(+). The protein operates within glycan metabolism; bacterial cellulose biosynthesis. This Komagataeibacter xylinus (Gluconacetobacter xylinus) protein is Putative cellulose synthase 2 (bcsABII-A).